A 192-amino-acid polypeptide reads, in one-letter code: MINISKKAQEHFTSLLSNEPENTQIRVFIVNPGTPNAECGVAFCPENEIELSDIQLKYDGFFVYVNKDTISYLKNSVIDLVTDKIGSQLTLKAPYAKNNFSKKVSSSLEEKVKCFLNLEINPQLSMHGGRVELMKIDENGIAAIQFSGGCNGCSMIGSTLKETVEKKLLSSFSEIKKVYDETHHLHGQHSFY.

2 residues coordinate [4Fe-4S] cluster: Cys150 and Cys153.

This sequence belongs to the NfuA family. In terms of assembly, homodimer. It depends on [4Fe-4S] cluster as a cofactor.

Functionally, involved in iron-sulfur cluster biogenesis. Binds a 4Fe-4S cluster, can transfer this cluster to apoproteins, and thereby intervenes in the maturation of Fe/S proteins. Could also act as a scaffold/chaperone for damaged Fe/S proteins. The sequence is that of Fe/S biogenesis protein NfuA from Buchnera aphidicola subsp. Acyrthosiphon pisum (strain 5A).